Here is a 553-residue protein sequence, read N- to C-terminus: Putative transport protein YidE (553 aa).

Transmembrane regions (helical) follow at residues 4 to 24 (IALTVSVLALVAVVGLWIGNI), 28 to 48 (GVGFGIGGVLFGGIIVGHFVD), 65 to 85 (FGLILFVYTIGIQVGPGFFAS), 95 to 115 (LFAVLIVIMGGLVTAILHKIF), and 158 to 178 (MSYAMAYPFGICGILLTMWLM). 2 consecutive RCK C-terminal domains span residues 192-276 (KHES…VIGK) and 279-361 (DTSL…VVGN). 6 helical membrane passes run 371–391 (MLPVFIGIGLGVLLGSIPLFV), 393–413 (GFPVALKLGLAGGPLIMALIL), 437–457 (LGIVLFLAVVGLKSGGDFVDT), 464–484 (LSWIGYGIFITAIPLITVGLL), 493–513 (YLTLCGMLAGSMTDPPALAFA), and 533–553 (LVMFLRIITPQLLAVIFWGMG).

It belongs to the AAE transporter (TC 2.A.81) family. YidE subfamily.

The protein resides in the cell membrane. The polypeptide is Putative transport protein YidE (Salmonella heidelberg (strain SL476)).